Here is a 271-residue protein sequence, read N- to C-terminus: Oligodendrocyte transcription factor 1 (271 aa).

Positions 38–117 (YRQPPSSSSS…RKINSRERKR (80 aa)) are disordered. Residues 43 to 61 (SSSSSSTSSTSSTSSSSTT) are compositionally biased toward low complexity. Positions 105 to 164 (QLRRKINSRERKRMQDLNLAMDALREVILPYSAAHCQGAPGRKLSKIATLLLARNYILLL) constitute a bHLH domain.

Expressed in the brain, in oligodendrocytes. Strongly expressed in oligodendrogliomas, while expression is weak to moderate in astrocytomas. Expression in glioblastomas is highly variable.

It localises to the nucleus. Functionally, promotes formation and maturation of oligodendrocytes, especially within the brain. Cooperates with OLIG2 to establish the pMN domain of the embryonic neural tube. This is Oligodendrocyte transcription factor 1 (OLIG1) from Homo sapiens (Human).